The chain runs to 327 residues: Clavesin-2 (327 aa).

Positions Ile96–Asp257 constitute a CRAL-TRIO domain. Residues Glu287–Asp327 are disordered. Phosphoserine is present on Ser325.

As to quaternary structure, forms a complex with clathrin heavy chain and gamma-adaptin.

The protein localises to the golgi apparatus. The protein resides in the trans-Golgi network membrane. Its subcellular location is the cytoplasmic vesicle. It localises to the clathrin-coated vesicle. It is found in the early endosome membrane. Functionally, required for normal morphology of late endosomes and/or lysosomes in neurons. Binds phosphatidylinositol 3,5-bisphosphate (PtdIns(3,5)P2). The chain is Clavesin-2 (CLVS2) from Homo sapiens (Human).